Here is a 477-residue protein sequence, read N- to C-terminus: Aspartyl/glutamyl-tRNA(Asn/Gln) amidotransferase subunit B (477 aa).

It belongs to the GatB/GatE family. GatB subfamily. In terms of assembly, heterotrimer of A, B and C subunits.

It carries out the reaction L-glutamyl-tRNA(Gln) + L-glutamine + ATP + H2O = L-glutaminyl-tRNA(Gln) + L-glutamate + ADP + phosphate + H(+). The catalysed reaction is L-aspartyl-tRNA(Asn) + L-glutamine + ATP + H2O = L-asparaginyl-tRNA(Asn) + L-glutamate + ADP + phosphate + 2 H(+). Functionally, allows the formation of correctly charged Asn-tRNA(Asn) or Gln-tRNA(Gln) through the transamidation of misacylated Asp-tRNA(Asn) or Glu-tRNA(Gln) in organisms which lack either or both of asparaginyl-tRNA or glutaminyl-tRNA synthetases. The reaction takes place in the presence of glutamine and ATP through an activated phospho-Asp-tRNA(Asn) or phospho-Glu-tRNA(Gln). The protein is Aspartyl/glutamyl-tRNA(Asn/Gln) amidotransferase subunit B of Thioalkalivibrio sulfidiphilus (strain HL-EbGR7).